Consider the following 100-residue polypeptide: NADH-quinone oxidoreductase subunit K (100 aa).

Helical transmembrane passes span Met-1–Gly-21, Ile-28–Ala-48, and Phe-64–Phe-84.

The protein belongs to the complex I subunit 4L family. As to quaternary structure, NDH-1 is composed of 14 different subunits. Subunits NuoA, H, J, K, L, M, N constitute the membrane sector of the complex.

The protein localises to the cell inner membrane. The enzyme catalyses a quinone + NADH + 5 H(+)(in) = a quinol + NAD(+) + 4 H(+)(out). Functionally, NDH-1 shuttles electrons from NADH, via FMN and iron-sulfur (Fe-S) centers, to quinones in the respiratory chain. The immediate electron acceptor for the enzyme in this species is believed to be ubiquinone. Couples the redox reaction to proton translocation (for every two electrons transferred, four hydrogen ions are translocated across the cytoplasmic membrane), and thus conserves the redox energy in a proton gradient. The protein is NADH-quinone oxidoreductase subunit K of Helicobacter pylori (strain ATCC 700392 / 26695) (Campylobacter pylori).